The chain runs to 116 residues: Aspartate 1-decarboxylase (116 aa).

Ser25 functions as the Schiff-base intermediate with substrate; via pyruvic acid in the catalytic mechanism. Ser25 carries the post-translational modification Pyruvic acid (Ser). Position 57 (Thr57) interacts with substrate. Catalysis depends on Tyr58, which acts as the Proton donor. Gly73–Ala75 lines the substrate pocket.

Belongs to the PanD family. As to quaternary structure, heterooctamer of four alpha and four beta subunits. The cofactor is pyruvate. In terms of processing, is synthesized initially as an inactive proenzyme, which is activated by self-cleavage at a specific serine bond to produce a beta-subunit with a hydroxyl group at its C-terminus and an alpha-subunit with a pyruvoyl group at its N-terminus.

The protein localises to the cytoplasm. The enzyme catalyses L-aspartate + H(+) = beta-alanine + CO2. The protein operates within cofactor biosynthesis; (R)-pantothenate biosynthesis; beta-alanine from L-aspartate: step 1/1. Catalyzes the pyruvoyl-dependent decarboxylation of aspartate to produce beta-alanine. The protein is Aspartate 1-decarboxylase of Phocaeicola vulgatus (strain ATCC 8482 / DSM 1447 / JCM 5826 / CCUG 4940 / NBRC 14291 / NCTC 11154) (Bacteroides vulgatus).